Reading from the N-terminus, the 238-residue chain is Citrate-binding protein (238 aa).

Positions 1–31 (MKMKRSPYCFCCSFALLLLVSFLKDRHFCSA) are cleaved as a signal peptide. The propeptide at 225-238 (LEGCNNNHGTWLVQ) is removed in mature form.

Its subcellular location is the vacuole. May be a subunit of a vacuolar malate and citrate transporter. In Hevea brasiliensis (Para rubber tree), this protein is Citrate-binding protein (CBP).